The chain runs to 133 residues: Phosphoribosyl-AMP cyclohydrolase (133 aa).

A Mg(2+)-binding site is contributed by Asp77. Cys78 provides a ligand contact to Zn(2+). Mg(2+)-binding residues include Asp79 and Asp81. Zn(2+) is bound by residues Cys95 and Cys102.

Belongs to the PRA-CH family. Homodimer. Mg(2+) serves as cofactor. Requires Zn(2+) as cofactor.

It localises to the cytoplasm. The enzyme catalyses 1-(5-phospho-beta-D-ribosyl)-5'-AMP + H2O = 1-(5-phospho-beta-D-ribosyl)-5-[(5-phospho-beta-D-ribosylamino)methylideneamino]imidazole-4-carboxamide. The protein operates within amino-acid biosynthesis; L-histidine biosynthesis; L-histidine from 5-phospho-alpha-D-ribose 1-diphosphate: step 3/9. In terms of biological role, catalyzes the hydrolysis of the adenine ring of phosphoribosyl-AMP. This chain is Phosphoribosyl-AMP cyclohydrolase, found in Azotobacter chroococcum mcd 1.